Consider the following 493-residue polypeptide: Guanosine-5'-triphosphate,3'-diphosphate pyrophosphatase (493 aa).

Belongs to the GppA/Ppx family. GppA subfamily.

The enzyme catalyses guanosine 3'-diphosphate 5'-triphosphate + H2O = guanosine 3',5'-bis(diphosphate) + phosphate + H(+). It participates in purine metabolism; ppGpp biosynthesis; ppGpp from GTP: step 2/2. In terms of biological role, catalyzes the conversion of pppGpp to ppGpp. Guanosine pentaphosphate (pppGpp) is a cytoplasmic signaling molecule which together with ppGpp controls the 'stringent response', an adaptive process that allows bacteria to respond to amino acid starvation, resulting in the coordinated regulation of numerous cellular activities. This is Guanosine-5'-triphosphate,3'-diphosphate pyrophosphatase from Salmonella gallinarum (strain 287/91 / NCTC 13346).